The sequence spans 364 residues: Alanine racemase (364 aa).

The Proton acceptor; specific for D-alanine role is filled by K35. K35 bears the N6-(pyridoxal phosphate)lysine mark. R131 contacts substrate. Y256 acts as the Proton acceptor; specific for L-alanine in catalysis. M304 serves as a coordination point for substrate.

Belongs to the alanine racemase family. Pyridoxal 5'-phosphate is required as a cofactor.

The enzyme catalyses L-alanine = D-alanine. Its pathway is amino-acid biosynthesis; D-alanine biosynthesis; D-alanine from L-alanine: step 1/1. Catalyzes the interconversion of L-alanine and D-alanine. May also act on other amino acids. The protein is Alanine racemase (alr) of Halorhodospira halophila (strain DSM 244 / SL1) (Ectothiorhodospira halophila (strain DSM 244 / SL1)).